An 863-amino-acid polypeptide reads, in one-letter code: Potassium/sodium hyperpolarization-activated cyclic nucleotide-gated channel 2 (863 aa).

Over residues 1–10 (MDARGGGGRP) the composition is skewed to gly residues. The tract at residues 1–131 (MDARGGGGRP…AGPAGEPRGS (131 aa)) is disordered. Over 1-188 (MDARGGGGRP…PYSDFRFYWD (188 aa)) the chain is Cytoplasmic. Residues 17–47 (TPAPGPPPPPPPPAPPQPQPPPAPPPNPTTP) are compositionally biased toward pro residues. The segment covering 106 to 128 (GAASGPAAAEEAGSEEAGPAGEP) has biased composition (low complexity). S119 and S134 each carry phosphoserine. The segment at 131–182 (SQASFLQRQFGALLQPGVNKFSLRMFGSQKAVEREQERVKSAGAWIIHPYSD) is involved in subunit assembly. Residues 189–209 (FTMLLFMVGNLIIIPVGITFF) traverse the membrane as a helical segment. Residues 210-213 (KDET) lie on the Extracellular side of the membrane. A helical transmembrane segment spans residues 214 to 234 (TAPWIVFNVVSDTFFLMDLVL). The Cytoplasmic portion of the chain corresponds to 235 to 261 (NFRTGIVIEDNTEIILDPEKIKKKYLR). Residues 262 to 282 (TWFVVDFVSSIPVDYIFLIVE) traverse the membrane as a helical segment. Residues 283 to 290 (KGIDSEVY) are Extracellular-facing. The helical; Voltage-sensor transmembrane segment at 291–311 (KTARALRIVRFTKILSLLRLL) threads the bilayer. Topologically, residues 312 to 342 (RLSRLIRYIHQWEEIFHMTYDLASAVMRICN) are cytoplasmic. The chain crosses the membrane as a helical span at residues 343-363 (LISMMLLLCHWDGCLQFLVPM). Over 364–386 (LQDFPSDCWVSINNMVNHSWSEL) the chain is Extracellular. N380 is a glycosylation site (N-linked (GlcNAc...) asparagine). The segment at residues 387–408 (YSFALFKAMSHMLCIGYGRQAP) is an intramembrane region (pore-forming). The Extracellular segment spans residues 409–413 (ESMTD). A helical transmembrane segment spans residues 414-434 (IWLTMLSMIVGATCYAMFIGH). Residues 435 to 863 (ATALIQSLDS…SARSRLSSNL (429 aa)) are Cytoplasmic-facing. 6 residues coordinate 3',5'-cyclic AMP: G581, E582, C584, R591, T592, and R632. At S641 the chain carries Phosphoserine; by PKG/PRKG2. Residue S726 is modified to Phosphoserine. The residue at position 728 (R728) is an Omega-N-methylarginine. Residues 730-863 (VRRAPPGPLP…SARSRLSSNL (134 aa)) form a disordered region. Positions 734–755 (PPGPLPPAASPGPPAASPPAAP) are enriched in pro residues. Phosphoserine occurs at positions 743, 750, and 757. 2 stretches are compositionally biased toward low complexity: residues 756-765 (SSPRAPRTSP) and 778-834 (PALP…AAPS). 3 positions are modified to phosphoserine: S840, S842, and S847.

It belongs to the potassium channel HCN family. As to quaternary structure, homotetramer. The channel is composed of a homo- or heterotetrameric complex of pore-forming subunits. Heterotetramer with HCN1. Forms an obligate 4:4 complex with accessory subunit PEX5L. Interacts with KCNE2. In terms of processing, phosphorylation at Ser-641 by PRKG2 shifts the voltage-dependence to more negative voltages, hence counteracting the stimulatory effect of cGMP on gating. Post-translationally, N-glycosylated; required for cell surface trafficking of HCN2. S-palmitoylated. As to expression, highly expressed in neonatal and adult ventricle and in brain. Highly expressed in the pyramidal layer in hippocampus, in anterior dorsal nucleus in thalamus, in the mammillary nucleus in hypothalamus, in red nucleus, in trigeminal mesencephalic, spinal and principal nuclei, in cochlear and trapezoid nuclei and in the dorsal tegemental nucleus.

The protein resides in the cell membrane. It catalyses the reaction Na(+)(in) = Na(+)(out). It carries out the reaction K(+)(in) = K(+)(out). The enzyme catalyses NH4(+)(in) = NH4(+)(out). Its activity is regulated as follows. Activated by cAMP, and at 10-100 times higher concentrations, also by cGMP. cAMP binding causes a conformation change that leads to the assembly of an active tetramer and channel opening. In the absence of cAMP, the C-terminal region is thought to exert a tonic inhibition on the pore when HCN2 is in a non-tetrameric form. Channel activity is modulated by intracellular chloride ions and pH; acidic pH shifts the activation to more negative voltages. Phosphatidylinositol-4,5- bisphosphate (PIP(2)) acts as a ligand that allosterically opens HCN2 by shifting voltage-dependent channel activation toward depolarized potentials. Inhibited by extracellular cesium ions. Functionally, hyperpolarization-activated ion channel exhibiting weak selectivity for potassium over sodium ions. Contributes to the native pacemaker currents in heart (If) and in neurons (Ih). Can also transport ammonium in the distal nephron. Involved in the initiation of neuropathic pain in sensory neurons. Produces a large instantaneous current. In Rattus norvegicus (Rat), this protein is Potassium/sodium hyperpolarization-activated cyclic nucleotide-gated channel 2 (Hcn2).